The chain runs to 401 residues: Chorismate synthase (401 aa).

Residues arginine 40 and arginine 46 each contribute to the NADP(+) site. FMN is bound by residues 135-137 (RAS), 256-257 (QA), glycine 300, 315-319 (KPIST), and arginine 341.

This sequence belongs to the chorismate synthase family. In terms of assembly, homotetramer. The cofactor is FMNH2.

It carries out the reaction 5-O-(1-carboxyvinyl)-3-phosphoshikimate = chorismate + phosphate. It functions in the pathway metabolic intermediate biosynthesis; chorismate biosynthesis; chorismate from D-erythrose 4-phosphate and phosphoenolpyruvate: step 7/7. Functionally, catalyzes the anti-1,4-elimination of the C-3 phosphate and the C-6 proR hydrogen from 5-enolpyruvylshikimate-3-phosphate (EPSP) to yield chorismate, which is the branch point compound that serves as the starting substrate for the three terminal pathways of aromatic amino acid biosynthesis. This reaction introduces a second double bond into the aromatic ring system. The protein is Chorismate synthase of Mycobacterium avium (strain 104).